The sequence spans 367 residues: C-X-C chemokine receptor type 3 (367 aa).

The Extracellular portion of the chain corresponds to 1-56 (MYLEVSERQVLDASDIAFLLENSTSPYDYGENESDFSDSPPCPQDFSLNFDRTFLP). Asparagine 22 carries an N-linked (GlcNAc...) asparagine glycan. Sulfotyrosine occurs at positions 27 and 29. Residue asparagine 32 is glycosylated (N-linked (GlcNAc...) asparagine). Residues 57-77 (VLYSLLFLLGLLGNGAVAAVL) form a helical membrane-spanning segment. Over 78–89 (LSQRTALSSTDT) the chain is Cytoplasmic. A helical transmembrane segment spans residues 90–110 (FLLHLAVADVLLVLTLPLWAV). Topologically, residues 111–125 (DAAAQWVFGSGLCKV) are extracellular. A disulfide bond links cysteine 123 and cysteine 202. A helical transmembrane segment spans residues 126–146 (AGALFNINFYAGAFLLACISF). At 147–168 (DRYLSIVHATQIYRRDPWVRVA) the chain is on the cytoplasmic side. The helical transmembrane segment at 169-189 (LTCIVVWGLCVLFALPDFIFL) threads the bilayer. Over 190-222 (SASHDQRLNATHCQYNFPQVGRTALRVLQLVAG) the chain is Extracellular. N-linked (GlcNAc...) asparagine glycosylation is present at asparagine 198. The chain crosses the membrane as a helical span at residues 223 to 243 (FLMPLLVMAYCYAHILAVLLV). At 244–255 (SRGQRRFRAMRL) the chain is on the cytoplasmic side. Residues 256 to 276 (VVVVVVAFAVCWTPYHLVVLV) traverse the membrane as a helical segment. Residues 277–300 (DILMDVGVLARNCGRESHVDVAKS) lie on the Extracellular side of the membrane. Residues 301 to 321 (VTSGMGYMHCCLNPLLYAFVG) traverse the membrane as a helical segment. Residues 322–367 (VKFKEQMWMLLMRLGRSDQRGPQRQPSSSRRESSWSETTEASYLGL) are Cytoplasmic-facing. The disordered stretch occupies residues 339–367 (DQRGPQRQPSSSRRESSWSETTEASYLGL).

It belongs to the G-protein coupled receptor 1 family. In terms of assembly, homomer. Forms heteromers with ACKR4. Interacts with PF4/CXCL4. In terms of processing, sulfation on Tyr-27 and Tyr-29 is essential for CXCL10 binding. Post-translationally, N-glycosylated.

Its subcellular location is the cell membrane. Its function is as follows. Receptor for the C-X-C chemokine CXCL9, CXCL10 and CXCL11 and mediates the proliferation, survival and angiogenic activity of mesangial cells through a heterotrimeric G-protein signaling pathway. Probably promotes cell chemotaxis response. Binds to CCL21. Upon activation by PF4, induces activated T-lymphocytes migration mediated via downstream Ras/extracellular signal-regulated kinase (ERK) signaling. The protein is C-X-C chemokine receptor type 3 (Cxcr3) of Rattus norvegicus (Rat).